We begin with the raw amino-acid sequence, 102 residues long: Co-chaperonin GroES (102 aa).

The protein belongs to the GroES chaperonin family. In terms of assembly, heptamer of 7 subunits arranged in a ring. Interacts with the chaperonin GroEL.

It is found in the cytoplasm. Functionally, together with the chaperonin GroEL, plays an essential role in assisting protein folding. The GroEL-GroES system forms a nano-cage that allows encapsulation of the non-native substrate proteins and provides a physical environment optimized to promote and accelerate protein folding. GroES binds to the apical surface of the GroEL ring, thereby capping the opening of the GroEL channel. In Chlamydia trachomatis serovar L2 (strain ATCC VR-902B / DSM 19102 / 434/Bu), this protein is Co-chaperonin GroES.